A 934-amino-acid chain; its full sequence is Bifunctional uridylyltransferase/uridylyl-removing enzyme (934 aa).

Positions 1–379 (MSAHDLKLEE…TFSRRKRKLS (379 aa)) are uridylyltransferase. A uridylyl-removing region spans residues 380–736 (DDGAFISENH…AKPHAFEAVT (357 aa)). The 118-residue stretch at 496 to 613 (VDEHLLRCIA…IDFADTVQTM (118 aa)) folds into the HD domain. 2 consecutive ACT domains span residues 737-818 (EITV…DMLA) and 848-931 (VIEV…RSPQ).

This sequence belongs to the GlnD family. Mg(2+) is required as a cofactor.

It catalyses the reaction [protein-PII]-L-tyrosine + UTP = [protein-PII]-uridylyl-L-tyrosine + diphosphate. The catalysed reaction is [protein-PII]-uridylyl-L-tyrosine + H2O = [protein-PII]-L-tyrosine + UMP + H(+). Uridylyltransferase (UTase) activity is inhibited by glutamine, while glutamine activates uridylyl-removing (UR) activity. Its function is as follows. Modifies, by uridylylation and deuridylylation, the PII regulatory proteins (GlnB and homologs), in response to the nitrogen status of the cell that GlnD senses through the glutamine level. Under low glutamine levels, catalyzes the conversion of the PII proteins and UTP to PII-UMP and PPi, while under higher glutamine levels, GlnD hydrolyzes PII-UMP to PII and UMP (deuridylylation). Thus, controls uridylylation state and activity of the PII proteins, and plays an important role in the regulation of nitrogen assimilation and metabolism. This Brucella suis biovar 1 (strain 1330) protein is Bifunctional uridylyltransferase/uridylyl-removing enzyme.